A 529-amino-acid polypeptide reads, in one-letter code: Sodium/hydrogen exchanger 4 (529 aa).

The Cytoplasmic portion of the chain corresponds to 1–19; it reads MSIGLTEFVTNKLAAEHPQ. Residues 20–40 traverse the membrane as a helical segment; that stretch reads VIPISVFIAILCLCLVIGHLL. Residues 41 to 45 are Vacuolar-facing; sequence EENRW. Residues 46 to 66 traverse the membrane as a helical segment; sequence VNESITAILVGAASGTVILLI. Residues 67-73 are Cytoplasmic-facing; it reads SKGKSSH. The segment at residues 74 to 94 is an intramembrane region (helical); sequence ILVFDEELFFIYLLPPIIFNA. Over 95-112 the chain is Cytoplasmic; it reads GFQVKKKKFFHNFLTIMS. Residues 113 to 133 traverse the membrane as a helical segment; that stretch reads FGVIGVFISTVIISFGTWWLF. At 134–171 the chain is on the vacuolar side; sequence PKLGFKGLSARDYLAIGTIFSSTDTVCTLQILHQDETP. Residues 172–192 traverse the membrane as a helical segment; the sequence is LLYSLVFGEGVVNDATSVVLF. Over 193–214 the chain is Cytoplasmic; sequence NAVQKIQFESLTGWTALQVFGN. Residues 215–235 form a helical membrane-spanning segment; that stretch reads FLYLFSTSTLLGIGVGLITSF. At 236–250 the chain is on the vacuolar side; sequence VLKTLYFGRHSTTRE. The helical transmembrane segment at 251–267 threads the bilayer; it reads LAIMVLMAYLSYMLAEL. At 268-273 the chain is on the cytoplasmic side; it reads FSLSGI. Residues 274–291 form a helical membrane-spanning segment; it reads LTVFFCGVLMSHYASYNV. Residues 292–301 are Vacuolar-facing; it reads TESSRITSRH. A helical transmembrane segment spans residues 302 to 322; sequence VFAMLSFIAETFIFLYVGTDA. Residues 323–342 are Cytoplasmic-facing; sequence LDFTKWKTSSLSFGGTLGVS. A helical membrane pass occupies residues 343-363; sequence GVITALVLLGRAAFVFPLSVL. Residues 364-380 are Vacuolar-facing; that stretch reads TNFMNRHTERNESITFK. N-linked (GlcNAc...) asparagine glycosylation occurs at asparagine 374. Residues 381-401 form a helical membrane-spanning segment; that stretch reads HQVIIWWAGLMRGAVSIALAF. Over 402–415 the chain is Cytoplasmic; that stretch reads KQFTYSGVTLDPVN. A helical transmembrane segment spans residues 416-436; sequence AAMVTNTTIVVLFTTLVFGFL. The Vacuolar segment spans residues 437–529; the sequence is TKPLVNYLLP…GPRRENQPEC (93 aa).

It belongs to the monovalent cation:proton antiporter 1 (CPA1) transporter (TC 2.A.36) family. In terms of tissue distribution, expressed at very low levels in roots and shoots.

It is found in the vacuole membrane. It carries out the reaction Na(+)(in) + H(+)(out) = Na(+)(out) + H(+)(in). The catalysed reaction is K(+)(in) + H(+)(out) = K(+)(out) + H(+)(in). Its function is as follows. May act in low affinity electroneutral exchange of protons for cations such as Na(+) or K(+) across membranes. May also exchange Li(+) and Cs(+) with a lower affinity. The chain is Sodium/hydrogen exchanger 4 (NHX4) from Arabidopsis thaliana (Mouse-ear cress).